A 454-amino-acid polypeptide reads, in one-letter code: Pyrimidine/purine nucleotide 5'-monophosphate nucleosidase (454 aa).

Belongs to the LOG family.

It catalyses the reaction a pyrimidine ribonucleoside 5'-phosphate + H2O = a pyrimidine nucleobase + D-ribose 5-phosphate. The enzyme catalyses AMP + H2O = adenine + D-ribose 5-phosphate. It carries out the reaction GMP + H2O = guanine + D-ribose 5-phosphate. The catalysed reaction is CMP + H2O = cytosine + D-ribose 5-phosphate. It catalyses the reaction IMP + H2O = hypoxanthine + D-ribose 5-phosphate. The enzyme catalyses UMP + H2O = D-ribose 5-phosphate + uracil. It carries out the reaction dTMP + H2O = 2-deoxy-D-ribose 5-phosphate + thymine. In terms of biological role, catalyzes the hydrolysis of the N-glycosidic bond of diverse pyrimidine and purine nucleotide 5'-monophosphates, to form ribose 5-phosphate and the corresponding free base. Can use AMP, GMP, IMP, CMP, dTMP and UMP as substrates. Cannot catalyze the reverse reactions. May contribute to nucleoside pool homeostasis by degrading excess nucleotides and feeding back the ribose moiety to catabolism. The polypeptide is Pyrimidine/purine nucleotide 5'-monophosphate nucleosidase (Escherichia coli O157:H7).